Reading from the N-terminus, the 172-residue chain is Alpha-crystallin A chain (172 aa).

Methionine 1 is modified (N-acetylmethionine). The interval 1-63 (MDVTIQHPWF…RTVLDSGISE (63 aa)) is required for complex formation with BFSP1 and BFSP2. Deamidated glutamine; partial is present on glutamine 6. Phosphoserine is present on serine 45. Glutamine 50 carries the post-translational modification Deamidated glutamine; partial. The sHSP domain occupies 52-163 (LFRTVLDSGI…HERAIPVARE (112 aa)). Position 70 is an N6-acetyllysine (lysine 70). Residue glutamine 90 is modified to Deamidated glutamine; partial. Lysine 99 carries the N6-acetyllysine modification. Histidine 100 is a binding site for Zn(2+). Residue asparagine 101 is modified to Deamidated asparagine; partial. Positions 102 and 107 each coordinate Zn(2+). A Phosphoserine modification is found at serine 122. At asparagine 123 the chain carries Deamidated asparagine; partial. Glutamine 147 carries the post-translational modification Deamidated glutamine; partial. Histidine 154 lines the Zn(2+) pocket. Serine 168 carries an O-linked (GlcNAc) serine glycan.

This sequence belongs to the small heat shock protein (HSP20) family. As to quaternary structure, heteromer composed of three CRYAA and one CRYAB subunits. Inter-subunit bridging via zinc ions enhances stability, which is crucial as there is no protein turn over in the lens. Can also form homodimers and homotetramers (dimers of dimers) which serve as the building blocks of homooligomers. Within homooligomers, the zinc-binding motif is created from residues of 3 different molecules. His-100 and Glu-102 from one molecule are ligands of the zinc ion, and His-107 and His-154 residues from additional molecules complete the site with tetrahedral coordination geometry. Part of a complex required for lens intermediate filament formation composed of BFSP1, BFSP2 and CRYAA. Acetylation at Lys-70 may increase chaperone activity. In terms of processing, undergoes age-dependent proteolytical cleavage at the C-terminus.

It localises to the cytoplasm. The protein localises to the nucleus. Its function is as follows. Contributes to the transparency and refractive index of the lens. Acts as a chaperone, preventing aggregation of various proteins under a wide range of stress conditions. Required for the correct formation of lens intermediate filaments as part of a complex composed of BFSP1, BFSP2 and CRYAA. In Macaca mulatta (Rhesus macaque), this protein is Alpha-crystallin A chain (CRYAA).